A 480-amino-acid polypeptide reads, in one-letter code: Ammonium transporter 2 member 4 (480 aa).

Residues M1–T27 are Extracellular-facing. A helical membrane pass occupies residues A28–V48. The Cytoplasmic segment spans residues K49–T51. Residues W52 to V72 traverse the membrane as a helical segment. Topologically, residues S73–T113 are extracellular. A glycan (N-linked (GlcNAc...) asparagine) is linked at N111. The helical transmembrane segment at M114–L134 threads the bilayer. The Cytoplasmic segment spans residues G135–A141. The chain crosses the membrane as a helical span at residues W142–W162. Residues C163 to D175 are Extracellular-facing. A helical membrane pass occupies residues F176 to W196. Residues V197–N214 lie on the Cytoplasmic side of the membrane. A helical transmembrane segment spans residues M215–G235. The Extracellular segment spans residues A236 to T242. A helical membrane pass occupies residues I243–V263. Over M264–T274 the chain is Cytoplasmic. A helical transmembrane segment spans residues V275 to V295. The Extracellular portion of the chain corresponds to V296 to G298. The chain crosses the membrane as a helical span at residues W299 to L319. Residues H320–A334 lie on the Cytoplasmic side of the membrane. The helical transmembrane segment at V335–V355 threads the bilayer. Topologically, residues P356–Q394 are extracellular. The helical transmembrane segment at I395 to I415 threads the bilayer. Residues V416–V480 lie on the Cytoplasmic side of the membrane.

Belongs to the ammonia transporter channel (TC 1.A.11.2) family.

It is found in the cell membrane. Its function is as follows. Involved in ammonium transport. May be involved in arbuscular mycorrhizal (AM) symbiosis with AM fungi. The chain is Ammonium transporter 2 member 4 from Medicago truncatula (Barrel medic).